Reading from the N-terminus, the 513-residue chain is Zinc finger protein RFP (513 aa).

The RING-type zinc-finger motif lies at 16-57 (CPVCLQYFAEPMMLDCGHNICCACLARCWGTAETNVSCPQCR). 4 residues coordinate Zn(2+): cysteine 96, histidine 99, cysteine 118, and histidine 124. Residues 96–127 (CEKHREPLKLYCEEDQMPICVVCDRSREHRGH) form a B box-type zinc finger. 2 coiled-coil regions span residues 132-172 (LEEA…AELL) and 282-311 (QKCL…LREA). The B30.2/SPRY domain maps to 298–492 (MQSDMEKIQE…SAAPLIICPM (195 aa)).

It belongs to the TRIM/RBCC family. As to quaternary structure, homomultimerizes. Part of a complex consisting of TRIM27, USP7 and MAGEL2; directly interacts with USP7. Interacts with PML, EIF3S6, EPC1, CHD4 and EID1. Interacts with MAGED4, MAGEF1 and MAGEL2. Interacts with PTPN11. Interacts with autophagy receptor p62/SQSTM1. (Microbial infection) Interacts with M.tuberculosis PtpA, whick blocks TRIM27-promoted JNK/p38 MAPK pathway activation and cell apoptosis. In terms of assembly, (Microbial infection) Interacts with herpes simplex virus protein ICP0. As to expression, expressed in testis namely within the seminiferous tubules.

It is found in the nucleus. The protein localises to the cytoplasm. The protein resides in the PML body. It localises to the early endosome. Its subcellular location is the mitochondrion. It carries out the reaction S-ubiquitinyl-[E2 ubiquitin-conjugating enzyme]-L-cysteine + [acceptor protein]-L-lysine = [E2 ubiquitin-conjugating enzyme]-L-cysteine + N(6)-ubiquitinyl-[acceptor protein]-L-lysine.. It functions in the pathway protein modification; protein ubiquitination. Its function is as follows. E3 ubiquitin-protein ligase that mediates ubiquitination of various substrates and thereby plays a role in diffent processes including proliferation, innate immunity, apoptosis, immune response or autophagy. Ubiquitinates PIK3C2B and inhibits its activity by mediating the formation of 'Lys-48'-linked polyubiquitin chains; the function inhibits CD4 T-cell activation. Acts as a regulator of retrograde transport: together with MAGEL2, mediates the formation of 'Lys-63'-linked polyubiquitin chains at 'Lys-220' of WASHC1, leading to promote endosomal F-actin assembly. Has a transcriptional repressor activity by cooperating with EPC1. Induces apoptosis by activating Jun N-terminal kinase and p38 kinase and also increases caspase-3-like activity independently of mitochondrial events. May function in male germ cell development. Has DNA-binding activity and preferentially bound to double-stranded DNA. Forms a complex with and ubiquitinates the ubiquitin-specific protease USP7, which in turn deubiquitinates RIPK1 resulting in the positive regulation of TNF-alpha-induced apoptosis. In addition, acts with USP7 or PTPN11 as an inhibitor of the antiviral signaling pathway by promoting kinase TBK1 ubiquitination and degradation. Acts as a negative regulator of NOD2 signaling by mediating ubiquitination of NOD2, promoting its degradation by the proteasome. Alternatively, facilitates mitophagy via stabilization of active TBK1. Negatively regulates autophagy flux under basal conditions by directly polyubiquitinating ULK1. During starvation-induced autophagy, catalyzes non-degradative ubiquitination of the kinase STK38L promoting its activation and phosphorylation of ULK1 leading to its ubiquitination and degradation to restrain the amplitude and duration of autophagy. In terms of biological role, (Microbial infection) Positively regulates hepatitis C virus replication by suppressing type I IFN response during infection. The protein is Zinc finger protein RFP of Homo sapiens (Human).